Reading from the N-terminus, the 254-residue chain is Gamma-glutamyl-gamma-aminobutyrate hydrolase (254 aa).

Residues 16 to 250 (RNRLKGHATQ…ITAWQHHIAE (235 aa)) form the Glutamine amidotransferase type-1 domain. Catalysis depends on Cys-114, which acts as the Nucleophile. Active-site residues include His-222 and Glu-224.

This sequence belongs to the peptidase C26 family.

It catalyses the reaction 4-(gamma-L-glutamylamino)butanoate + H2O = 4-aminobutanoate + L-glutamate. The protein operates within amine and polyamine degradation; putrescine degradation; 4-aminobutanoate from putrescine: step 4/4. Functionally, involved in the breakdown of putrescine via hydrolysis of the gamma-glutamyl linkage of gamma-glutamyl-gamma-aminobutyrate. This is Gamma-glutamyl-gamma-aminobutyrate hydrolase (puuD) from Shigella flexneri.